We begin with the raw amino-acid sequence, 373 residues long: UDP-N-acetylglucosamine--N-acetylmuramyl-(pentapeptide) pyrophosphoryl-undecaprenol N-acetylglucosamine transferase (373 aa).

UDP-N-acetyl-alpha-D-glucosamine is bound by residues 14–16 (TAG), asparagine 128, arginine 165, serine 199, and glutamine 295.

The protein belongs to the glycosyltransferase 28 family. MurG subfamily.

The protein localises to the cell membrane. It carries out the reaction di-trans,octa-cis-undecaprenyl diphospho-N-acetyl-alpha-D-muramoyl-L-alanyl-D-glutamyl-meso-2,6-diaminopimeloyl-D-alanyl-D-alanine + UDP-N-acetyl-alpha-D-glucosamine = di-trans,octa-cis-undecaprenyl diphospho-[N-acetyl-alpha-D-glucosaminyl-(1-&gt;4)]-N-acetyl-alpha-D-muramoyl-L-alanyl-D-glutamyl-meso-2,6-diaminopimeloyl-D-alanyl-D-alanine + UDP + H(+). It participates in cell wall biogenesis; peptidoglycan biosynthesis. Its function is as follows. Cell wall formation. Catalyzes the transfer of a GlcNAc subunit on undecaprenyl-pyrophosphoryl-MurNAc-pentapeptide (lipid intermediate I) to form undecaprenyl-pyrophosphoryl-MurNAc-(pentapeptide)GlcNAc (lipid intermediate II). The sequence is that of UDP-N-acetylglucosamine--N-acetylmuramyl-(pentapeptide) pyrophosphoryl-undecaprenol N-acetylglucosamine transferase from Mycobacterium sp. (strain JLS).